Reading from the N-terminus, the 306-residue chain is 17-beta-hydroxysteroid dehydrogenase type 3 (306 aa).

44 to 73 is an NADP(+) binding site; sequence GQWAVITGAGDGIGKAYSFELARHGLNVVL. Serine 181 is a substrate binding site. The active-site Proton acceptor is tyrosine 194.

This sequence belongs to the short-chain dehydrogenases/reductases (SDR) family. 17-beta-HSD 3 subfamily.

It is found in the endoplasmic reticulum. It carries out the reaction a 17beta-hydroxy steroid + NADP(+) = a 17-oxo steroid + NADPH + H(+). The enzyme catalyses testosterone + NADP(+) = androst-4-ene-3,17-dione + NADPH + H(+). The catalysed reaction is 17beta-estradiol + NADP(+) = estrone + NADPH + H(+). It catalyses the reaction 3beta-hydroxyandrost-5-en-17-one + NADPH + H(+) = androst-5-en-3beta,17beta-diol + NADP(+). It carries out the reaction 17beta-hydroxy-5alpha-androstan-3-one + NADP(+) = 5alpha-androstan-3,17-dione + NADPH + H(+). The enzyme catalyses androsterone + NADPH + H(+) = 5alpha-androstane-3alpha,17beta-diol + NADP(+). The catalysed reaction is 3beta-hydroxy-5alpha-androstan-17-one + NADPH + H(+) = 5alpha-androstane-3beta,17beta-diol + NADP(+). It catalyses the reaction androst-4-ene-3,11,17-trione + NADPH + H(+) = 17beta-hydroxyandrost-4-ene-3,11-dione + NADP(+). It carries out the reaction 11beta-hydroxyandrost-4-ene-3,17-dione + NADPH + H(+) = 11beta,17beta-dihydroxyandrost-4-ene-3-one + NADP(+). Its pathway is hormone biosynthesis; testosterone biosynthesis. The protein operates within steroid metabolism. In terms of biological role, catalyzes the conversion of 17-oxosteroids to 17beta-hydroxysteroids. Favors the reduction of androstenedione to testosterone. Testosterone is the key androgen driving male development and function. Uses NADPH while the two other EDH17B enzymes use NADH. Androgens such as epiandrosterone, dehydroepiandrosterone, androsterone and androstanedione are accepted as substrates and reduced at C-17. Can reduce 11-ketoandrostenedione as well as 11beta-hydroxyandrostenedione at C-17 to the respective testosterone forms. Plays a role in the rate-limiting-step for the maximum level of testosterone production by the testis but does not affect basal testosterone production. The polypeptide is 17-beta-hydroxysteroid dehydrogenase type 3 (Rattus norvegicus (Rat)).